Reading from the N-terminus, the 986-residue chain is MPENIIAGIPVHFPFEPYDVQRAYMEKVIICLRDGTNGVLESPTGTGKTLSLLCSTLGWIRTRQSEVQLNMQKLQHDQQTQLTGAAGAGAAMGSEIAAVIGKSNNWGVPKVIYASRTHSQLTQAMRELKRTAYANMRAVVLGSRDQLCIHPDVMREQGNSNKVNMCKLKVHAKSCTFQLRVESKKDHPDFRGPSIMDIEDLVKVGQRLKMCPYFASKELVNSADITFMPYNYLLDPKARKANKIELSNAIVILDEGHNIEKICEESASVQIRSSDVAIAIEDVTHIMKIFTSSSDSQDTAGPDEPKDFTIDDLTLLKEMLLELEKAIDGVIVDNKADGATYPASYMYELLGKANFTHGNCATIVALLDKLVQYLMVASQHSMLRKGGSFMVLADLLNIVFANKGDIMSKVSCSFKVHAEIEESKQSQTNNKAQTGWLGKGNNNAASSASKTGRIINFWCFNPGFGMEQLLNTHVRSVILTSGTLAPLKPLIAELAIPVAQHLENPHIVNEAQVYVKIIGTGPDREQLISNYKNRDNPKYISSLGQTILNVSRIVPDGLLVFFPSYPMLNQCVDAWQASGLWADISSRKPIFLEPRGKDQFTSTMEEFYQAIRDSKGACFMAVCRGKVSEGLDFADRNGRAVIITGLPFPPLKDPKVILKRRYLETNRTRENQLLSGNEWYNLEATRAVNQAIGRVIRHRNDYGAILLCDARFQDASQVQQLSKWIRNHLGARPQSSPFGPIVRELRQFFKHAEQTIVQPVERAVEPVLHTICSKKEDQLTLAPITQIKREPGNTGTSKFQLASELAAKVEMANSIKTWTPADYANAAGRNAQSPKAPNPMDFMSRLNSNVTSIDFNADSGRDLVKIHKRERSSPTFHNESMGSKKRYRLINNIAQSELKEAPESRADFLREVRSVINSDQFRSFGKALLAYKTGGDDSFETLMLLLLDVMGAPKLRYLLHGMRRYLKNEHKSEFDVRLASLEAAQL.

A Helicase ATP-binding domain is found at 7 to 326; that stretch reads AGIPVHFPFE…KEMLLELEKA (320 aa). 42 to 49 lines the ATP pocket; it reads SPTGTGKT. [4Fe-4S] cluster-binding residues include cysteine 148, cysteine 166, cysteine 175, and cysteine 211. The short motif at 254-257 is the DEAH box element; the sequence is DEGH. Position 875 is a phosphothreonine (threonine 875).

It belongs to the helicase family. RAD3/XPD subfamily.

The protein localises to the nucleus. The catalysed reaction is ATP + H2O = ADP + phosphate + H(+). In terms of biological role, a probable ATP-dependent DNA helicase implicated in DNA repair and the maintenance of genomic stability. Acts as an anti-recombinase to counteract toxic recombination and limit crossover during meiosis. Regulates meiotic recombination and crossover homeostasis by physically dissociating strand invasion events and thereby promotes noncrossover repair by meiotic synthesis dependent strand annealing (SDSA) as well as disassembly of D loop recombination intermediates. This is Regulator of telomere elongation helicase 1 homolog from Drosophila grimshawi (Hawaiian fruit fly).